A 388-amino-acid polypeptide reads, in one-letter code: Chorismate synthase (388 aa).

Residues Arg-39 and Arg-45 each contribute to the NADP(+) site. FMN is bound by residues 130 to 132 (RSS), 251 to 252 (NA), Gly-296, 311 to 315 (KPIPT), and Arg-337.

Belongs to the chorismate synthase family. In terms of assembly, homotetramer. It depends on FMNH2 as a cofactor.

It catalyses the reaction 5-O-(1-carboxyvinyl)-3-phosphoshikimate = chorismate + phosphate. The protein operates within metabolic intermediate biosynthesis; chorismate biosynthesis; chorismate from D-erythrose 4-phosphate and phosphoenolpyruvate: step 7/7. In terms of biological role, catalyzes the anti-1,4-elimination of the C-3 phosphate and the C-6 proR hydrogen from 5-enolpyruvylshikimate-3-phosphate (EPSP) to yield chorismate, which is the branch point compound that serves as the starting substrate for the three terminal pathways of aromatic amino acid biosynthesis. This reaction introduces a second double bond into the aromatic ring system. This is Chorismate synthase from Streptococcus sanguinis (strain SK36).